Here is a 560-residue protein sequence, read N- to C-terminus: Glutamate--tRNA ligase (560 aa).

A 'HIGH' region motif is present at residues 108 to 118 (PNPSGPLHLGH).

The protein belongs to the class-I aminoacyl-tRNA synthetase family. Glutamate--tRNA ligase type 2 subfamily.

The protein localises to the cytoplasm. It catalyses the reaction tRNA(Glu) + L-glutamate + ATP = L-glutamyl-tRNA(Glu) + AMP + diphosphate. In terms of biological role, catalyzes the attachment of glutamate to tRNA(Glu) in a two-step reaction: glutamate is first activated by ATP to form Glu-AMP and then transferred to the acceptor end of tRNA(Glu). This is Glutamate--tRNA ligase from Methanocorpusculum labreanum (strain ATCC 43576 / DSM 4855 / Z).